The chain runs to 426 residues: 4-hydroxy-3-methylbut-2-en-1-yl diphosphate synthase (flavodoxin) (426 aa).

Positions 310, 313, 356, and 363 each coordinate [4Fe-4S] cluster.

It belongs to the IspG family. The cofactor is [4Fe-4S] cluster.

It carries out the reaction (2E)-4-hydroxy-3-methylbut-2-enyl diphosphate + oxidized [flavodoxin] + H2O + 2 H(+) = 2-C-methyl-D-erythritol 2,4-cyclic diphosphate + reduced [flavodoxin]. The protein operates within isoprenoid biosynthesis; isopentenyl diphosphate biosynthesis via DXP pathway; isopentenyl diphosphate from 1-deoxy-D-xylulose 5-phosphate: step 5/6. Its function is as follows. Converts 2C-methyl-D-erythritol 2,4-cyclodiphosphate (ME-2,4cPP) into 1-hydroxy-2-methyl-2-(E)-butenyl 4-diphosphate. This chain is 4-hydroxy-3-methylbut-2-en-1-yl diphosphate synthase (flavodoxin), found in Rhodopseudomonas palustris (strain BisA53).